A 199-amino-acid chain; its full sequence is Securin (199 aa).

2 disordered regions span residues Met-1–Gly-23 and Arg-58–Tyr-108. Ala-2 is subject to N-acetylalanine. Positions Val-7–Gly-23 are enriched in basic and acidic residues. Positions Arg-58–Leu-61 match the D-box motif. The TEK-box 1 motif lies at Thr-68 to Lys-70. Residues Lys-76–Leu-85 are compositionally biased toward polar residues. The TEK-box 2 signature appears at Thr-91–Lys-93. Ser-162 bears the Phosphoserine mark. The short motif at Pro-179 to Pro-192 is the SH3-binding element.

It belongs to the securin family. As to quaternary structure, interacts with the caspase-like ESPL1, and prevents its protease activity by covering its active site. Interacts with p53/TP53 and blocks its activity probably by blocking its binding to DNA. Interacts with the Ku 70 kDa subunit of ds-DNA kinase. Interacts with PTTG1IP. Interacts with RPS10 and DNAJA1. Phosphorylated at Ser-162 by CDK1 during mitosis. In terms of processing, phosphorylated in vitro by ds-DNA kinase. Post-translationally, ubiquitinated through 'Lys-11' linkage of ubiquitin moieties by the anaphase promoting complex (APC) at the onset of anaphase, conducting to its degradation. 'Lys-11'-linked ubiquitination is mediated by the E2 ligase UBE2C/UBCH10. Expressed at low level in most tissues, except in adult testis, where it is highly expressed. Expressed in both spermatocytes and spermatids.

The protein localises to the cytoplasm. The protein resides in the nucleus. In terms of biological role, regulatory protein, which plays a central role in chromosome stability, in the p53/TP53 pathway, and DNA repair. Probably acts by blocking the action of key proteins. During the mitosis, it blocks Separase/ESPL1 function, preventing the proteolysis of the cohesin complex and the subsequent segregation of the chromosomes. At the onset of anaphase, it is ubiquitinated, conducting to its destruction and to the liberation of ESPL1. Its function is however not limited to a blocking activity, since it is required to activate ESPL1. Negatively regulates the transcriptional activity and related apoptosis activity of p53/TP53. The negative regulation of p53/TP53 may explain the strong transforming capability of the protein when it is overexpressed. May also play a role in DNA repair via its interaction with Ku, possibly by connecting DNA damage-response pathways with sister chromatid separation. This chain is Securin (Pttg1), found in Rattus norvegicus (Rat).